A 185-amino-acid polypeptide reads, in one-letter code: Ribosome-recycling factor (185 aa).

It belongs to the RRF family.

The protein resides in the cytoplasm. Responsible for the release of ribosomes from messenger RNA at the termination of protein biosynthesis. May increase the efficiency of translation by recycling ribosomes from one round of translation to another. This Desulfosudis oleivorans (strain DSM 6200 / JCM 39069 / Hxd3) (Desulfococcus oleovorans) protein is Ribosome-recycling factor.